The chain runs to 602 residues: Proline--tRNA ligase (602 aa).

Belongs to the class-II aminoacyl-tRNA synthetase family. ProS type 1 subfamily. As to quaternary structure, homodimer.

It is found in the cytoplasm. It catalyses the reaction tRNA(Pro) + L-proline + ATP = L-prolyl-tRNA(Pro) + AMP + diphosphate. Catalyzes the attachment of proline to tRNA(Pro) in a two-step reaction: proline is first activated by ATP to form Pro-AMP and then transferred to the acceptor end of tRNA(Pro). As ProRS can inadvertently accommodate and process non-cognate amino acids such as alanine and cysteine, to avoid such errors it has two additional distinct editing activities against alanine. One activity is designated as 'pretransfer' editing and involves the tRNA(Pro)-independent hydrolysis of activated Ala-AMP. The other activity is designated 'posttransfer' editing and involves deacylation of mischarged Ala-tRNA(Pro). The misacylated Cys-tRNA(Pro) is not edited by ProRS. The polypeptide is Proline--tRNA ligase (Thermosynechococcus vestitus (strain NIES-2133 / IAM M-273 / BP-1)).